We begin with the raw amino-acid sequence, 538 residues long: Bifunctional purine biosynthesis protein PurH (538 aa).

The 153-residue stretch at 6–158 (KHIPAPDLHR…KNHAYVATVV (153 aa)) folds into the MGS-like domain.

Belongs to the PurH family.

It carries out the reaction (6R)-10-formyltetrahydrofolate + 5-amino-1-(5-phospho-beta-D-ribosyl)imidazole-4-carboxamide = 5-formamido-1-(5-phospho-D-ribosyl)imidazole-4-carboxamide + (6S)-5,6,7,8-tetrahydrofolate. It catalyses the reaction IMP + H2O = 5-formamido-1-(5-phospho-D-ribosyl)imidazole-4-carboxamide. It functions in the pathway purine metabolism; IMP biosynthesis via de novo pathway; 5-formamido-1-(5-phospho-D-ribosyl)imidazole-4-carboxamide from 5-amino-1-(5-phospho-D-ribosyl)imidazole-4-carboxamide (10-formyl THF route): step 1/1. It participates in purine metabolism; IMP biosynthesis via de novo pathway; IMP from 5-formamido-1-(5-phospho-D-ribosyl)imidazole-4-carboxamide: step 1/1. The polypeptide is Bifunctional purine biosynthesis protein PurH (Brucella ovis (strain ATCC 25840 / 63/290 / NCTC 10512)).